The following is a 367-amino-acid chain: MSLSRVSVTGVRNLHPVTLSPSPRINILYGANGSGKTSVLEAIHLLGIARSFRSSRLLPVIQYEQPSCTVFGQVDLAQGGHSNLGVSRDRQGEFQIRIDGQNARSAAQLAEILPLQLINPDSFRLLEGAPKIRRQFLDWGVFHVEPRFMATWQRLQKALKQRNSWLRHGTLDAASQAAWDRELCSASDEIDEFRRAYIKALKPVFEQTLSELVELEGLTLSYYRGWDKEKELSTVLASSIHRDQQMGHTQAGPQRADLRLRLGAHNAADILSRGQQKLVVCALRIAQGHLVSQVRRGQCIYLVDDLPSELDDNHRRALCRLLEELRCQVFITCVDQEFLREGWQTETPVALFHVEQGRITQTHDHRE.

30-37 (GANGSGKT) provides a ligand contact to ATP.

Belongs to the RecF family.

Its subcellular location is the cytoplasm. In terms of biological role, the RecF protein is involved in DNA metabolism; it is required for DNA replication and normal SOS inducibility. RecF binds preferentially to single-stranded, linear DNA. It also seems to bind ATP. The protein is DNA replication and repair protein RecF of Pseudomonas syringae pv. syringae (strain B728a).